The chain runs to 401 residues: Tryptophan synthase beta chain (401 aa).

Position 92 is an N6-(pyridoxal phosphate)lysine (Lys92).

Belongs to the TrpB family. In terms of assembly, tetramer of two alpha and two beta chains. It depends on pyridoxal 5'-phosphate as a cofactor.

The catalysed reaction is (1S,2R)-1-C-(indol-3-yl)glycerol 3-phosphate + L-serine = D-glyceraldehyde 3-phosphate + L-tryptophan + H2O. It functions in the pathway amino-acid biosynthesis; L-tryptophan biosynthesis; L-tryptophan from chorismate: step 5/5. Functionally, the beta subunit is responsible for the synthesis of L-tryptophan from indole and L-serine. This chain is Tryptophan synthase beta chain, found in Ruthia magnifica subsp. Calyptogena magnifica.